Consider the following 269-residue polypeptide: Phosphonates import ATP-binding protein PhnC (269 aa).

The region spanning 8-251 is the ABC transporter domain; sequence IHLYGASLRH…LLDALYANEQ (244 aa). Position 40-47 (40-47) interacts with ATP; sequence GPSGAGKS.

Belongs to the ABC transporter superfamily. Phosphonates importer (TC 3.A.1.9.1) family. The complex is composed of two ATP-binding proteins (PhnC), two transmembrane proteins (PhnE) and a solute-binding protein (PhnD).

The protein resides in the cell inner membrane. The catalysed reaction is phosphonate(out) + ATP + H2O = phosphonate(in) + ADP + phosphate + H(+). Part of the ABC transporter complex PhnCDE involved in phosphonates import. Responsible for energy coupling to the transport system. In Pseudomonas putida (strain ATCC 47054 / DSM 6125 / CFBP 8728 / NCIMB 11950 / KT2440), this protein is Phosphonates import ATP-binding protein PhnC.